We begin with the raw amino-acid sequence, 497 residues long: Glutamyl-tRNA(Gln) amidotransferase subunit A (497 aa).

Active-site charge relay system residues include Lys80 and Ser155. Ser179 (acyl-ester intermediate) is an active-site residue.

The protein belongs to the amidase family. GatA subfamily. As to quaternary structure, heterotrimer of A, B and C subunits.

It catalyses the reaction L-glutamyl-tRNA(Gln) + L-glutamine + ATP + H2O = L-glutaminyl-tRNA(Gln) + L-glutamate + ADP + phosphate + H(+). Functionally, allows the formation of correctly charged Gln-tRNA(Gln) through the transamidation of misacylated Glu-tRNA(Gln) in organisms which lack glutaminyl-tRNA synthetase. The reaction takes place in the presence of glutamine and ATP through an activated gamma-phospho-Glu-tRNA(Gln). This chain is Glutamyl-tRNA(Gln) amidotransferase subunit A (gatA), found in Streptomyces coelicolor (strain ATCC BAA-471 / A3(2) / M145).